The sequence spans 293 residues: MISGIINLKKEAGMTSHDAVFKLRKILHEKKIGHGGTLDPDVTGVLPIAVGKATRVIEYMTEAGKVYEGEITIGFSTTTEDASGEVVQTTPITELDGATVDQAMASFEGEITQIPPMYSAVKINGKKLYEYARAGEEVERPQRQVKITEFVRTSPIELENGTARFTFRVACSKGTYVRTLSVDLGVKLGFASHMSALRRTASAGLTLDSSLSLSQISEMVEAGDQSFLLPIEFGVQDLPAVQVTEDDAKEISFGRFISINSQEPLVAAFLGNKVLAIMEKRGQVYKPRKVLSQ.

The active-site Nucleophile is the aspartate 39.

The protein belongs to the pseudouridine synthase TruB family. Type 1 subfamily.

It carries out the reaction uridine(55) in tRNA = pseudouridine(55) in tRNA. In terms of biological role, responsible for synthesis of pseudouridine from uracil-55 in the psi GC loop of transfer RNAs. In Streptococcus thermophilus (strain CNRZ 1066), this protein is tRNA pseudouridine synthase B.